Consider the following 270-residue polypeptide: Exosome complex component rrp43 (270 aa).

The protein belongs to the RNase PH family. In terms of assembly, component of the RNA exosome complex. Specifically part of the catalytically inactive RNA exosome core complex (Exo-9) which may associate with the catalytic subunits rrp66 and dis3 in cytoplasmic- and nuclear-specific RNA exosome complex forms. Exo-9 is formed by a hexameric base ring of RNase PH domain-containing subunits and a cap ring consisting of csl4, rrp4 and rrp40.

It localises to the cytoplasm. Its subcellular location is the nucleus. The protein localises to the nucleolus. Functionally, non-catalytic component of the RNA exosome complex which has 3'-&gt;5' exoribonuclease activity and participates in a multitude of cellular RNA processing and degradation events. In the nucleus, the RNA exosome complex is involved in proper maturation of stable RNA species such as rRNA, snRNA and snoRNA, in the elimination of RNA processing by-products and non-coding 'pervasive' transcripts, such as antisense RNA species and cryptic unstable transcripts (CUTs), and of mRNAs with processing defects, thereby limiting or excluding their export to the cytoplasm. In the cytoplasm, the RNA exosome complex is involved in general mRNA turnover and in RNA surveillance pathways, preventing translation of aberrant mRNAs. The catalytic inactive RNA exosome core complex of 9 subunits (Exo-9) is proposed to play a pivotal role in the binding and presentation of RNA for ribonucleolysis, and to serve as a scaffold for the association with catalytic subunits and accessory proteins or complexes. ski6 is part of the hexameric ring of RNase PH domain-containing subunits proposed to form a central channel which threads RNA substrates for degradation. In Schizosaccharomyces pombe (strain 972 / ATCC 24843) (Fission yeast), this protein is Exosome complex component rrp43 (rrp43).